A 387-amino-acid chain; its full sequence is Probable protein phosphatase 2C 25 (387 aa).

Positions 52-351 (EFSFAVVQAN…DDITVVVVYI (300 aa)) constitute a PPM-type phosphatase domain. Mn(2+)-binding residues include aspartate 83, glycine 84, aspartate 283, and aspartate 342.

The protein belongs to the PP2C family. The cofactor is Mg(2+). Requires Mn(2+) as cofactor.

The catalysed reaction is O-phospho-L-seryl-[protein] + H2O = L-seryl-[protein] + phosphate. It carries out the reaction O-phospho-L-threonyl-[protein] + H2O = L-threonyl-[protein] + phosphate. This Oryza sativa subsp. japonica (Rice) protein is Probable protein phosphatase 2C 25.